The primary structure comprises 67 residues: Conotoxin AbVIN (67 aa).

The signal sequence occupies residues 1–17; it reads VIIIAVLFLTACQLIAT. Residues 18-40 constitute a propeptide that is removed on maturation; sequence ASYARSERKHPDLRLSSRNSKLS. Intrachain disulfides connect Cys-43–Cys-57, Cys-50–Cys-61, and Cys-56–Cys-66.

This sequence belongs to the conotoxin O1 superfamily. Expressed by the venom duct.

The protein localises to the secreted. The polypeptide is Conotoxin AbVIN (Conus abbreviatus (Abbreviated cone)).